The sequence spans 148 residues: Truncated transcription factor CAULIFLOWER D (148 aa).

The MADS-box domain maps to 1–61; that stretch reads MGRGRVEMKR…GKLFEYSSES (61 aa). The K-box; partial domain maps to 90-148; the sequence is QTNWSMEYSRLKAKIELWERNQRHYLGEDLESISIKELQNLEQQLDTSLKHIRSRKVCK.

In terms of assembly, homodimer capable of binding to CArG-box sequences.

The protein resides in the nucleus. Its function is as follows. Probable transcription factor that promotes early floral meristem identity in synergy with APETALA1, FRUITFULL and LEAFY. Is required subsequently for the transition of an inflorescence meristem into a floral meristem. Seems to be partially redundant to the function of APETALA1. The polypeptide is Truncated transcription factor CAULIFLOWER D (CAL-D) (Brassica oleracea var. botrytis (Cauliflower)).